We begin with the raw amino-acid sequence, 107 residues long: Iron-binding protein IscA (107 aa).

Residues Cys-35, Cys-99, and Cys-101 each coordinate Fe cation.

It belongs to the HesB/IscA family. In terms of assembly, homodimer; may form tetramers and higher multimers. Fe cation is required as a cofactor.

In terms of biological role, is able to transfer iron-sulfur clusters to apo-ferredoxin. Multiple cycles of [2Fe2S] cluster formation and transfer are observed, suggesting that IscA acts catalytically. Recruits intracellular free iron so as to provide iron for the assembly of transient iron-sulfur cluster in IscU in the presence of IscS, L-cysteine and the thioredoxin reductase system TrxA/TrxB. This Klebsiella pneumoniae (strain 342) protein is Iron-binding protein IscA.